The following is a 146-amino-acid chain: 3-dehydroquinate dehydratase (146 aa).

Tyr-24 functions as the Proton acceptor in the catalytic mechanism. 3 residues coordinate substrate: Asn-75, His-81, and Asp-88. Residue His-101 is the Proton donor of the active site. Residues 102–103 and Arg-112 each bind substrate; that span reads LS.

Belongs to the type-II 3-dehydroquinase family. Homododecamer.

It catalyses the reaction 3-dehydroquinate = 3-dehydroshikimate + H2O. The protein operates within metabolic intermediate biosynthesis; chorismate biosynthesis; chorismate from D-erythrose 4-phosphate and phosphoenolpyruvate: step 3/7. Its function is as follows. Catalyzes a trans-dehydration via an enolate intermediate. This Maricaulis maris (strain MCS10) (Caulobacter maris) protein is 3-dehydroquinate dehydratase.